Reading from the N-terminus, the 68-residue chain is Adipokinetic prohormone type 1 (68 aa).

Residues 1 to 20 form the signal peptide; it reads MNYVSIFVLIVACLCVLADA. A Pyrrolidone carboxylic acid modification is found at Q21. Position 30 is a glycine amide (G30). A propeptide spanning residues 34–68 is cleaved from the precursor; sequence GAVAATMSCRSEETIAAIYKLIQNEAERLLLCQKP.

As to expression, expressed in antennal lobe (AL), corpora cardiaca (CC), corpora allata (CA) and gnathal ganglion (GNG) (at protein level). Expression in CC and CA detected in all animals, expression in GNG in some animals and in AL in few animals (at protein level).

The protein localises to the secreted. In terms of biological role, this hormone, released from cells in the corpora cardiaca, causes release of diglycerides from the fat body and stimulation of muscles to use these diglycerides as an energy source during energy-demanding processes. The sequence is that of Adipokinetic prohormone type 1 from Agrotis ipsilon (Black cutworm moth).